The primary structure comprises 205 residues: MALRTKNPNRQKTEAIESIKNDVKASSAFIFTEYRGLKVEQITELRKKLRENACTYKVVRNNFARIAFEDADIKDVDSWLTGPTALAMIAEDANLAAKTLFEYAKDAPALVIKGAVVDGEIYDAKQIEAFSKLPGKKDLIAMFMSTVNATTSKFVRTLQAIVDKGGAQGAAPAEAKAEAPASEEKAADTPAEQPAESAPEAAPEA.

The segment at 167-205 is disordered; sequence AQGAAPAEAKAEAPASEEKAADTPAEQPAESAPEAAPEA. 2 stretches are compositionally biased toward low complexity: residues 169-180 and 190-205; these read GAAPAEAKAEAP and PAEQ…APEA.

This sequence belongs to the universal ribosomal protein uL10 family. Part of the ribosomal stalk of the 50S ribosomal subunit. The N-terminus interacts with L11 and the large rRNA to form the base of the stalk. The C-terminus forms an elongated spine to which L12 dimers bind in a sequential fashion forming a multimeric L10(L12)X complex.

Forms part of the ribosomal stalk, playing a central role in the interaction of the ribosome with GTP-bound translation factors. The polypeptide is Large ribosomal subunit protein uL10 (Treponema denticola (strain ATCC 35405 / DSM 14222 / CIP 103919 / JCM 8153 / KCTC 15104)).